The following is a 190-amino-acid chain: Large ribosomal subunit protein bL9 (190 aa).

Belongs to the bacterial ribosomal protein bL9 family.

In terms of biological role, binds to the 23S rRNA. This is Large ribosomal subunit protein bL9 from Methylobacterium radiotolerans (strain ATCC 27329 / DSM 1819 / JCM 2831 / NBRC 15690 / NCIMB 10815 / 0-1).